Reading from the N-terminus, the 232-residue chain is Oxidoreductase 1 (232 aa).

Belongs to the MQO family. FAD is required as a cofactor.

In terms of biological role, oxidoreductase; part of the gene cluster that mediates the biosynthesis of elsinochromes, pigments consisting of at least four interconvertible tautomers (A, B, C and D) that have a core phenolic quinone to which various side chains are attached and which play an important role in fungal pathogenesis. The non-reducing polyketide synthase PKS1 was proposed to iteratively catalyze decarboxylation between acetyl-CoA and malonyl-CoA subunits for polyketide chain elongation. The released polyketide undergoes cyclization to form an aromatic ring, and proceeds via serial modification steps to produce the heptaketide back- bone of elsinochrome. As elsinochrome has a symmetrical structure, two identical heptaketides are fused to form a core 1,2-dihydrobenzo-perylene ring structure, which can then be successively modified to produce the various derivatives of elsinochrome. Some of these reactions may be cooperatively carried out, at least in part, by the products of RDT1, OXR1 and PKS1. PRF1, embedded within the elsinochrome cluster possibly functions to stabilize some of the biosynthetic enzymes required for elsinochrome production. As prefoldin is a hexamer containing 2 a and 4 b subunits, additional prefoldin subunits, whose coding genes may not immediately link to the elsinochrome biosynthetic gene cluster, are required to fulfill the chaperone function. In addition, no methyltransferase-coding gene exists within the biosynthetic gene cluster, even though elsinochrome has four methyl groups at positions C3, C7, C8 and C12. Apparently, the identified gene cluster does not contain the entire entourage of genes responsible for elsinochrome biosynthesis. Once elsinochrome is synthesized, it must be exported outside the fungal cells, which is probably accomplished by the ECT1 transporter, to avoid toxicity. In Elsinoe fawcettii (Citrus scab fungus), this protein is Oxidoreductase 1.